The following is a 221-amino-acid chain: PKHD-type hydroxylase P9215_13741 (221 aa).

Residues 80–174 (RIHGTMFTKT…RFVVVGWIES (95 aa)) form the Fe2OG dioxygenase domain. The Fe cation site is built by His98, Asp100, and His155. Residue Arg165 coordinates 2-oxoglutarate.

Fe(2+) is required as a cofactor. L-ascorbate serves as cofactor.

The polypeptide is PKHD-type hydroxylase P9215_13741 (Prochlorococcus marinus (strain MIT 9215)).